The sequence spans 90 residues: Probable Fe(2+)-trafficking protein (90 aa).

The protein belongs to the Fe(2+)-trafficking protein family.

Its function is as follows. Could be a mediator in iron transactions between iron acquisition and iron-requiring processes, such as synthesis and/or repair of Fe-S clusters in biosynthetic enzymes. This Cupriavidus taiwanensis (strain DSM 17343 / BCRC 17206 / CCUG 44338 / CIP 107171 / LMG 19424 / R1) (Ralstonia taiwanensis (strain LMG 19424)) protein is Probable Fe(2+)-trafficking protein.